The primary structure comprises 882 residues: MATFGFLSAPLKSTNEVDLVKPLTSYIDNVYNTSDNNRSDVAEAVQELNKLRSKACCQPLDKHQSALDVLTRYYDQLVAIENKIIISATQNPVVFKWKDAFDKGSLFSSRASLSLSDGSFERAAVLFNIGSLMSQIGAAQQFHTDDEIKVSAKLFQQSAGVFARLRDVVLGMVQQEPTPDLMPDTLAALSALMTAQAQEAIYIKGHKDKMKATSMVKISAQVAEFYSEAQKMMSKDIVRGLWDKDWSAIVSGKNLAYQALAQYHQSEVCGEARQIGEQLSRLAESLKLFDTAQKYLPRDITGIWDIYPSVSKAHAAAKKDNDFIYHEKVSDFRTLPTLPKAVLAKPTPMQTPMTPSFRDMFAVLVPVQVHNAMQSYDARKAELVNMETVRMREATQLMNGVLASLNLPAALDDVTSTETLPESLKLKSAKLKQNGGSSEIMRLFSELPTLYQRNEDILTETSRILNEEKESDDTMRKQLGTKWTRMSSEQLTGPLVTEIGKYRGILHTASNADKMVKEKFESHRQGIELLSKNESELRSSIPGQTAHATGETDTVRQLRQFMSQWNEVTTDRELLEKELKNTNCDIANDFLKAMAENQLINEEHISKEKIAQIFGDLKRRVQSSLDTQETLMNQIQAANNTFTGEKTGSSTGAERERILKMLAQASDAYVELKANLEEGTKFYNDLTPILVRLQQKVSDFAFARQTEKEDLMRQLQLSIVSGQAAKAVVDGVNSLVSSYLTGGTNAAQSPANAPPRPPPPRPAAPSVESPIPPPRTQQSMQATPGAPPQYNPYQQQQQPQMQQFQQHPGYYQQPMPYGQPQPMFQPQYQPTFAAPYPTFPGAFPSYQQQWPQQQQQGGFPPNPQFGQQNQQQGGGGGANPFQ.

One can recognise a BRO1 domain in the interval 5 to 398 (GFLSAPLKST…VRMREATQLM (394 aa)). A disordered region spans residues 743-882 (GTNAAQSPAN…GGGGGANPFQ (140 aa)). The segment covering 752-763 (NAPPRPPPPRPA) has biased composition (pro residues). 2 stretches are compositionally biased toward low complexity: residues 791 to 830 (NPYQ…QYQP) and 847 to 871 (QQQW…QNQQ). The segment covering 872 to 882 (QGGGGGANPFQ) has biased composition (gly residues).

Required for lin-12 degradation after it has been internalised in the vulval precursor cells. The sequence is that of Apoptosis-linked gene 2-interacting protein X 1 (alx-1) from Caenorhabditis elegans.